A 148-amino-acid chain; its full sequence is uncharacterized protein (148 aa).

An N-terminal signal peptide occupies residues 1 to 19; that stretch reads MLSNAKLLLSLAMASTALG. N41 and N59 each carry an N-linked (GlcNAc...) asparagine glycan. A lipid anchor (GPI-anchor amidated asparagine) is attached at N127. Residues 128–148 constitute a propeptide, removed in mature form; sequence AANARAIPGALGLAGAVMMLL.

This sequence belongs to the SED1 family. In terms of processing, the GPI-anchor is attached to the protein in the endoplasmic reticulum and serves to target the protein to the cell surface. There, the glucosamine-inositol phospholipid moiety is cleaved off and the GPI-modified mannoprotein is covalently attached via its lipidless GPI glycan remnant to the 1,6-beta-glucan of the outer cell wall layer.

The protein resides in the secreted. The protein localises to the cell wall. Its subcellular location is the membrane. Its function is as follows. Cell wall protein that plays a role in adaptation and resistance to cell wall stress. This is an uncharacterized protein from Saccharomyces cerevisiae (strain ATCC 204508 / S288c) (Baker's yeast).